Consider the following 394-residue polypeptide: Protein arginine N-methyltransferase 8 (394 aa).

Gly2 is lipidated: N-myristoyl glycine. Positions Met16–Ala40 are disordered. Short sequence motifs (SH3-binding) lie at residues Pro29–Pro42 and Pro53–Arg58. Over residues Pro30 to Pro39 the composition is skewed to pro residues. Arg58 is subject to Omega-N-methylarginine; by autocatalysis. Arg73 carries the asymmetric dimethylarginine; by autocatalysis modification. An SAM-dependent MTase PRMT-type domain is found at Arg73–Arg394. S-adenosyl-L-methionine is bound by residues His86, Arg95, Gly119, Gly119–Thr122, Glu141, and Glu170. Residues Glu185 and Glu194 contribute to the active site.

It belongs to the class I-like SAM-binding methyltransferase superfamily. Protein arginine N-methyltransferase family. PRMT8 subfamily. In terms of assembly, homodimer. Tetramer; individual homodimers associates to form a homotetramer. Homooctamer; individual homodimers associates to form a homooctamer and homooligomerization is required for proper localization to the cell membrane. Heterodimer with PRMT1; heterodimerization may recruit PRMT1 activity to the plasma membrane. Interacts with PRMT2 (via the SH3 domain). Interacts with FYN (via the SH3 domain). Interacts with EWS; independently of EWS methylation status. As to expression, brain-specific.

The protein resides in the cell membrane. It catalyses the reaction L-arginyl-[protein] + S-adenosyl-L-methionine = N(omega)-methyl-L-arginyl-[protein] + S-adenosyl-L-homocysteine + H(+). The catalysed reaction is L-arginyl-[protein] + 2 S-adenosyl-L-methionine = N(omega),N(omega)-dimethyl-L-arginyl-[protein] + 2 S-adenosyl-L-homocysteine + 2 H(+). Functionally, S-adenosyl-L-methionine-dependent and membrane-associated arginine methyltransferase that can both catalyze the formation of omega-N monomethylarginine (MMA) and asymmetrical dimethylarginine (aDMA) in proteins such as NIFK, myelin basic protein, histone H4, H2A and H2A/H2B dimer. Able to mono- and dimethylate EWS protein; however its precise role toward EWS remains unclear as it still interacts with fully methylated EWS. The chain is Protein arginine N-methyltransferase 8 from Homo sapiens (Human).